Here is a 253-residue protein sequence, read N- to C-terminus: 5'/3'-nucleotidase SurE (253 aa).

4 residues coordinate a divalent metal cation: Asp8, Asp9, Ser39, and Asn92.

This sequence belongs to the SurE nucleotidase family. A divalent metal cation serves as cofactor.

The protein localises to the cytoplasm. It catalyses the reaction a ribonucleoside 5'-phosphate + H2O = a ribonucleoside + phosphate. The enzyme catalyses a ribonucleoside 3'-phosphate + H2O = a ribonucleoside + phosphate. It carries out the reaction [phosphate](n) + H2O = [phosphate](n-1) + phosphate + H(+). In terms of biological role, nucleotidase with a broad substrate specificity as it can dephosphorylate various ribo- and deoxyribonucleoside 5'-monophosphates and ribonucleoside 3'-monophosphates with highest affinity to 3'-AMP. Also hydrolyzes polyphosphate (exopolyphosphatase activity) with the preference for short-chain-length substrates (P20-25). Might be involved in the regulation of dNTP and NTP pools, and in the turnover of 3'-mononucleotides produced by numerous intracellular RNases (T1, T2, and F) during the degradation of various RNAs. The chain is 5'/3'-nucleotidase SurE from Salmonella paratyphi A (strain AKU_12601).